The chain runs to 389 residues: MIIRSLLDTDLYKFTMMQVVLHHFPGAHVEYRFKCRNAGVDLVPFIEEIRAEIRHLCTLRFTDTELDYLRGMRFIKSDFVDFLGLFHLNEKYIDVRPAPSNDGQIEIVIAGPWLHTIMFEVPVLAIVNEVFFSRTQTHPQWEEGKRRLTDKLASLKRPGLEDCRIADYGTRRRFSHTWHEHVLLETHAQLGAQYAGTSNVYFAMKHGMTPLGTMAHEYLQACQALGPRLRDSQTFALETWAKEYRGDLGIALSDTYGFDAFLRDFDMFFCKLFDGVRHDSGDPFEWGERMLKHYDDMRAEPKSKALIFSDSLDMPKVIGLYERFHGRCKLAFGVGTNLTNDLGYTPLQIVIKIVRCNGQPVAKLSDAPEKTMCDDPAYLTYLKQVFGVQ.

Residue His-216 is modified to Phosphohistidine; by autocatalysis.

This sequence belongs to the NAPRTase family. In terms of processing, transiently phosphorylated on a His residue during the reaction cycle. Phosphorylation strongly increases the affinity for substrates and increases the rate of nicotinate D-ribonucleotide production. Dephosphorylation regenerates the low-affinity form of the enzyme, leading to product release.

It carries out the reaction nicotinate + 5-phospho-alpha-D-ribose 1-diphosphate + ATP + H2O = nicotinate beta-D-ribonucleotide + ADP + phosphate + diphosphate. Its pathway is cofactor biosynthesis; NAD(+) biosynthesis; nicotinate D-ribonucleotide from nicotinate: step 1/1. In terms of biological role, catalyzes the synthesis of beta-nicotinate D-ribonucleotide from nicotinate and 5-phospho-D-ribose 1-phosphate at the expense of ATP. The chain is Nicotinate phosphoribosyltransferase from Ralstonia pickettii (strain 12J).